The sequence spans 350 residues: Peroxidase 10 (350 aa).

The signal sequence occupies residues 1–27 (MDHKMSMYLFVSYLAIFTLFFKGFVSS). Cystine bridges form between C57–C137, C90–C95, C143–C346, and C222–C256. Residue H88 is the Proton acceptor of the active site. Ca(2+)-binding residues include D89, V92, G94, D96, and S98. N102 carries an N-linked (GlcNAc...) asparagine glycan. P185 lines the substrate pocket. N-linked (GlcNAc...) asparagine glycosylation is present at N193. A heme b-binding site is contributed by H215. T216 provides a ligand contact to Ca(2+). Ca(2+) contacts are provided by D270, S273, and D278.

This sequence belongs to the peroxidase family. Classical plant (class III) peroxidase subfamily. The cofactor is heme b. It depends on Ca(2+) as a cofactor. Expressed in the whole plant, with the highest expression in roots.

Its subcellular location is the secreted. The catalysed reaction is 2 a phenolic donor + H2O2 = 2 a phenolic radical donor + 2 H2O. Removal of H(2)O(2), oxidation of toxic reductants, biosynthesis and degradation of lignin, suberization, auxin catabolism, response to environmental stresses such as wounding, pathogen attack and oxidative stress. These functions might be dependent on each isozyme/isoform in each plant tissue. This is Peroxidase 10 (PER10) from Arabidopsis thaliana (Mouse-ear cress).